The following is a 194-amino-acid chain: dCTP deaminase (194 aa).

Residues 110–115 (RSSLAR), D128, 136–138 (VLE), Y171, K178, and Q182 contribute to the dCTP site. E138 acts as the Proton donor/acceptor in catalysis. The interval 173 to 194 (SRQDAKYKNQQSAVASRINQDR) is disordered. Over residues 180-194 (KNQQSAVASRINQDR) the composition is skewed to polar residues.

This sequence belongs to the dCTP deaminase family. In terms of assembly, homotrimer.

It carries out the reaction dCTP + H2O + H(+) = dUTP + NH4(+). It functions in the pathway pyrimidine metabolism; dUMP biosynthesis; dUMP from dCTP (dUTP route): step 1/2. In terms of biological role, catalyzes the deamination of dCTP to dUTP. The chain is dCTP deaminase from Actinobacillus succinogenes (strain ATCC 55618 / DSM 22257 / CCUG 43843 / 130Z).